A 315-amino-acid polypeptide reads, in one-letter code: Probable diguanylate cyclase DgcF (315 aa).

Transmembrane regions (helical) follow at residues 10–30 (FSTG…GVLP), 41–61 (IALI…SLAF), 80–100 (LLTF…VIDI), and 116–136 (LGIA…AAIN). Residues 173–310 (QHLTVMLLDI…GRNRTSTMRY (138 aa)) enclose the GGDEF domain. Mg(2+) is bound by residues Asp-181 and Ile-182. 3 residues coordinate substrate: Asn-189, His-194, and Asp-198. Glu-224 provides a ligand contact to Mg(2+).

In terms of assembly, homodimer. Mg(2+) serves as cofactor.

It is found in the cell membrane. The catalysed reaction is 2 GTP = 3',3'-c-di-GMP + 2 diphosphate. It functions in the pathway purine metabolism; 3',5'-cyclic di-GMP biosynthesis. Its function is as follows. Catalyzes the synthesis of cyclic-di-GMP (c-di-GMP) via the condensation of 2 GTP molecules. The protein is Probable diguanylate cyclase DgcF of Escherichia coli (strain K12).